A 199-amino-acid chain; its full sequence is Recombination protein RecR (199 aa).

The C4-type zinc finger occupies C57–C72. Positions S80–P175 constitute a Toprim domain.

The protein belongs to the RecR family.

Functionally, may play a role in DNA repair. It seems to be involved in an RecBC-independent recombinational process of DNA repair. It may act with RecF and RecO. This Moorella thermoacetica (strain ATCC 39073 / JCM 9320) protein is Recombination protein RecR.